We begin with the raw amino-acid sequence, 121 residues long: UPF0102 protein XF_0554 (121 aa).

This sequence belongs to the UPF0102 family.

The protein is UPF0102 protein XF_0554 of Xylella fastidiosa (strain 9a5c).